A 443-amino-acid chain; its full sequence is 3-phosphoshikimate 1-carboxyvinyltransferase (443 aa).

Lys25, Ser26, and Arg30 together coordinate 3-phosphoshikimate. Lys25 contributes to the phosphoenolpyruvate binding site. Residues Gly117 and Arg145 each coordinate phosphoenolpyruvate. 3-phosphoshikimate contacts are provided by Ser188, Ser189, Gln190, Ser217, Glu331, and His358. Residue Gln190 coordinates phosphoenolpyruvate. Glu331 (proton acceptor) is an active-site residue. Phosphoenolpyruvate-binding residues include Arg362, Arg404, and Lys428.

It belongs to the EPSP synthase family. In terms of assembly, monomer.

The protein localises to the cytoplasm. The catalysed reaction is 3-phosphoshikimate + phosphoenolpyruvate = 5-O-(1-carboxyvinyl)-3-phosphoshikimate + phosphate. It functions in the pathway metabolic intermediate biosynthesis; chorismate biosynthesis; chorismate from D-erythrose 4-phosphate and phosphoenolpyruvate: step 6/7. Its function is as follows. Catalyzes the transfer of the enolpyruvyl moiety of phosphoenolpyruvate (PEP) to the 5-hydroxyl of shikimate-3-phosphate (S3P) to produce enolpyruvyl shikimate-3-phosphate and inorganic phosphate. This is 3-phosphoshikimate 1-carboxyvinyltransferase from Tropheryma whipplei (strain TW08/27) (Whipple's bacillus).